A 201-amino-acid polypeptide reads, in one-letter code: DNA polymerase epsilon subunit C (201 aa).

Disordered regions lie at residues 102-165 (KKRE…KSTR) and 178-201 (SALD…STDP). Residues 117–144 (VVIEEPELHEDDGVEEEEEEDEVSEEEE) are compositionally biased toward acidic residues. Composition is skewed to basic and acidic residues over residues 145 to 164 (PVHN…DKST) and 182 to 201 (VGEH…STDP). Residues serine 186, serine 188, and serine 189 each carry the phosphoserine modification.

As to quaternary structure, DNA polymerase epsilon is a heterotetramer consisting of POL2, DPB2, DPB3 and DPB4.

Its subcellular location is the nucleus. Functionally, as accessory component of the DNA polymerase epsilon (DNA polymerase II) participates in chromosomal DNA replication. It is required during synthesis of the leading and lagging DNA strands at the replication fork and binds at/or near replication origins and moves along DNA with the replication fork. It has 3'-5' proofreading exonuclease activity that correct errors arising during DNA replication. It is also involved in DNA synthesis during DNA repair. In Saccharomyces cerevisiae (strain ATCC 204508 / S288c) (Baker's yeast), this protein is DNA polymerase epsilon subunit C (DPB3).